The sequence spans 1086 residues: Phosphinothricin tripeptide synthetase PhsC (1086 aa).

Residues arginine 22–glycine 43 are disordered. Residues valine 45–aspartate 484 are condensation. Residues leucine 510 to arginine 901 form an adenylation region. The segment at glycine 983 to leucine 1007 is disordered. The Carrier domain occupies proline 1006–arginine 1081. Serine 1041 carries the O-(pantetheine 4'-phosphoryl)serine modification.

Belongs to the NRP synthetase family. Pantetheine 4'-phosphate is required as a cofactor.

The catalysed reaction is holo-[peptidyl-carrier protein] + L-alanine + ATP = L-alanyl-[peptidyl-carrier protein] + AMP + diphosphate. Its pathway is secondary metabolite biosynthesis; bialaphos biosynthesis. Its function is as follows. Involved in the biosynthesis of phosphinothricin tripeptide (PTT), also known as bialaphos (BA), a natural-product antibiotic and potent herbicide. Adenylates L-alanine and loads it onto a peptidyl carrier domain via a thioester linkage to the phosphopanthetheine moiety. Shows weaker activity with aminobutyric acid and L-serine. The sequence is that of Phosphinothricin tripeptide synthetase PhsC from Streptomyces viridochromogenes (strain DSM 40736 / JCM 4977 / BCRC 1201 / Tue 494).